A 360-amino-acid polypeptide reads, in one-letter code: MAKSPETEHPNKVFGWGARDKSGVLSPFHFSRRDNGENDVTVKILFCGVCHTDLHTIKNDWGYSYYPVVPGHEIVGIATKVGKNVTKFKEGDRVGVGVISGSCQSCESCDQDLENYCPQMSFTYNAIGSDGTKNYGGYSENIVVDQRFVLRFPENLPSDSGAPLLCAGITVYSPMKYYGMTEAGKHLGVAGLGGLGHVAVKIGKAFGLKVTVISSSSTKAEEAINHLGADSFLVTTDPQKMKAAIGTMDYIIDTISAVHALYPLLGLLKVNGKLIALGLPEKPLELPMFPLVLGRKMVGGSDVGGMKETQEMLDFCAKHNITADIELIKMDEINTAMERLAKSDVRYRFVIDVANSLSPP.

Cysteine 50 contacts Zn(2+). Threonine 52 provides a ligand contact to NADP(+). Zn(2+) contacts are provided by histidine 72, glutamate 73, cysteine 103, cysteine 106, cysteine 109, cysteine 117, and cysteine 166. NADP(+) is bound by residues threonine 170, 191–196 (GLGGLG), 214–219 (SSSSTK), threonine 254, glycine 278, and 301–303 (SDV).

The protein belongs to the zinc-containing alcohol dehydrogenase family. Homodimer. Zn(2+) is required as a cofactor. As to expression, expressed in the vasculature of the primary root and elongation regions. Expressed in the hypocotyl, cotyledon veins, vasculature of the first rosette leaves, and hydathodes. In stems, expressed in the vascular cambium, interfascicular cambium, developing xylem, and phloem. Expressed in the entire floral organs at late developing stage, and in the abscission, style and stigmatic regions of siliques and seed funicules.

The catalysed reaction is (E)-cinnamyl alcohol + NADP(+) = (E)-cinnamaldehyde + NADPH + H(+). The protein operates within aromatic compound metabolism; phenylpropanoid biosynthesis. In terms of biological role, involved in lignin biosynthesis. May catalyze the final step specific for the production of lignin monomers, like coniferyl alcohol, sinapyl alcohol and 4-coumaryl alcohol. This Arabidopsis thaliana (Mouse-ear cress) protein is Probable cinnamyl alcohol dehydrogenase 9 (CAD9).